A 247-amino-acid chain; its full sequence is Carboxy-S-adenosyl-L-methionine synthase (247 aa).

S-adenosyl-L-methionine contacts are provided by residues Tyr-39, 64–66 (GCS), 89–90 (DN), 117–118 (DI), Asn-132, and Arg-199.

The protein belongs to the class I-like SAM-binding methyltransferase superfamily. Cx-SAM synthase family. In terms of assembly, homodimer.

The catalysed reaction is prephenate + S-adenosyl-L-methionine = carboxy-S-adenosyl-L-methionine + 3-phenylpyruvate + H2O. Catalyzes the conversion of S-adenosyl-L-methionine (SAM) to carboxy-S-adenosyl-L-methionine (Cx-SAM). The polypeptide is Carboxy-S-adenosyl-L-methionine synthase (Shigella sonnei (strain Ss046)).